The sequence spans 196 residues: Holliday junction branch migration complex subunit RuvA (196 aa).

Residues 1–65 are domain I; it reads MIGNLSGTVD…ENTTQLYGFI (65 aa). Residues 66-143 are domain II; sequence NKEEQSCLRL…KLETNNNNFY (78 aa). The flexible linker stretch occupies residues 144 to 147; the sequence is PINE. A domain III region spans residues 147 to 196; it reads EDAVSALINLGYEKTKVYDTIKKYKPNLDTKDIIRTALKELSNYEIDIMQ.

The protein belongs to the RuvA family. In terms of assembly, homotetramer. Forms an RuvA(8)-RuvB(12)-Holliday junction (HJ) complex. HJ DNA is sandwiched between 2 RuvA tetramers; dsDNA enters through RuvA and exits via RuvB. An RuvB hexamer assembles on each DNA strand where it exits the tetramer. Each RuvB hexamer is contacted by two RuvA subunits (via domain III) on 2 adjacent RuvB subunits; this complex drives branch migration. In the full resolvosome a probable DNA-RuvA(4)-RuvB(12)-RuvC(2) complex forms which resolves the HJ.

It is found in the cytoplasm. In terms of biological role, the RuvA-RuvB-RuvC complex processes Holliday junction (HJ) DNA during genetic recombination and DNA repair, while the RuvA-RuvB complex plays an important role in the rescue of blocked DNA replication forks via replication fork reversal (RFR). RuvA specifically binds to HJ cruciform DNA, conferring on it an open structure. The RuvB hexamer acts as an ATP-dependent pump, pulling dsDNA into and through the RuvAB complex. HJ branch migration allows RuvC to scan DNA until it finds its consensus sequence, where it cleaves and resolves the cruciform DNA. This Wolbachia sp. subsp. Brugia malayi (strain TRS) protein is Holliday junction branch migration complex subunit RuvA.